We begin with the raw amino-acid sequence, 265 residues long: Large ribosomal subunit protein eL8 (265 aa).

This sequence belongs to the eukaryotic ribosomal protein eL8 family. As to quaternary structure, interacts with cmd-1 in the presence of Ca(2+).

This chain is Large ribosomal subunit protein eL8, found in Caenorhabditis elegans.